The following is a 281-amino-acid chain: MIAFIGSVFSPWYRWSGRREPQNHCCINMVTTGTDGRFTMTDRGRSALRQSRDSFQVGPSKLTWTGKELVIDVDEWGALPKLGKLKGRVVLTPRAVTGVEVRLTPDAGHTWRPFAPIADVEVDLAPGHKWTGHGYFDANFGTRALEEDFSFWTWGRFPLKDRTVCFYDATRLDRTKVALAVQINPDGSVCEIDSPPPLVKMKRTPWFVRRETRCDAGAHPAGVYSLLEAPFYSRALMRTQIDGEETVGMHEALDLVRFRQPVLKPMLAVRVPRRAGWKHKD.

It belongs to the CrtC hydratase family.

The enzyme catalyses rhodopin = all-trans-lycopene + H2O. It carries out the reaction 1,1'-dihydroxy-1,1',2,2'-tetrahydrolycopene = rhodopin + H2O. The protein operates within carotenoid biosynthesis; spheroidene biosynthesis. Its function is as follows. Involved in the biosynthesis of carotenoids spheroidene and spirilloxanthin. Catalyzes the hydration of neurosporene to the corresponding hydroxylated carotenoids 1-HO-neurosporene and that of lycopene to 1-HO-lycopene. It exhibits negligible activity in converting HO-neurosporene, HO-lycopene, or any other derivative such as spheroidene, 1-HO-3,4-didehydrolycopene. This Rhodobacter capsulatus (strain ATCC BAA-309 / NBRC 16581 / SB1003) protein is Acyclic carotenoid 1,2-hydratase (crtC).